The primary structure comprises 98 residues: MAGLINKIGDALHIGGGNKEGEHKKEEEHKKHVDEHKSGEHKEGIVDKIKDKIHGGEGKSHDGEGKSHDGEKKKKKDKKEKKHHDDGHHSSSSDSDSD.

The disordered stretch occupies residues 1-98 (MAGLINKIGD…HSSSSDSDSD (98 aa)). The segment covering 19-72 (KEGEHKKEEEHKKHVDEHKSGEHKEGIVDKIKDKIHGGEGKSHDGEGKSHDGEK) has biased composition (basic and acidic residues). The span at 73-82 (KKKKDKKEKK) shows a compositional bias: basic residues.

This sequence belongs to the KS-type dehydrin family. Interacts with PXL1. Phosphorylated in vivo. Phosphorylated in vitro by PXL1. As to expression, highly expressed in the cambial zone of the stem vasculature (at protein level). Expressed in roots, rosettes leaves, stems, cauline leaves, flowers and siliques.

Its subcellular location is the cytoplasm. The protein resides in the nucleus. In terms of biological role, intrinsically disordered and metal-binding protein. Binds to the divalent cations cobalt, nickel, copper and zinc, but not to magnesium, calcium, manganese or cadmium. Binding to metal ions decreases disordered state, decreases susceptibility to trypsin and promotes self-association. Can reduce the formation of reactive oxygen species (ROS) in a copper-ascorbate in vitro system. The sequence is that of Dehydrin HIRD11 from Arabidopsis thaliana (Mouse-ear cress).